Reading from the N-terminus, the 211-residue chain is Ribonuclease HII (211 aa).

Residues 21–211 (SSIAGLDEAG…APLKSMFDVI (191 aa)) enclose the RNase H type-2 domain. Positions 27, 28, and 122 each coordinate a divalent metal cation.

Belongs to the RNase HII family. It depends on Mn(2+) as a cofactor. Requires Mg(2+) as cofactor.

It localises to the cytoplasm. The enzyme catalyses Endonucleolytic cleavage to 5'-phosphomonoester.. Functionally, endonuclease that specifically degrades the RNA of RNA-DNA hybrids. The polypeptide is Ribonuclease HII (Dehalococcoides mccartyi (strain ATCC BAA-2266 / KCTC 15142 / 195) (Dehalococcoides ethenogenes (strain 195))).